Here is a 179-residue protein sequence, read N- to C-terminus: Peptidyl-tRNA hydrolase 2, mitochondrial (179 aa).

The chain crosses the membrane as a helical span at residues 10-32; that stretch reads YLTNPGALSLAAGVACGVCLGWG. Residues Lys-76, Lys-81, Lys-95, Lys-106, Lys-115, Lys-171, and Lys-177 each participate in a glycyl lysine isopeptide (Lys-Gly) (interchain with G-Cter in ubiquitin) cross-link.

This sequence belongs to the PTH2 family. As to quaternary structure, monomer. Ubiquitinated by PRKN during mitophagy, leading to its degradation and enhancement of mitophagy. Deubiquitinated by USP30.

The protein resides in the mitochondrion outer membrane. It catalyses the reaction an N-acyl-L-alpha-aminoacyl-tRNA + H2O = an N-acyl-L-amino acid + a tRNA + H(+). In terms of biological role, peptidyl-tRNA hydrolase which releases tRNAs from the ribosome during protein synthesis. Promotes caspase-independent apoptosis by regulating the function of two transcriptional regulators, AES and TLE1. The sequence is that of Peptidyl-tRNA hydrolase 2, mitochondrial (PTRH2) from Bos taurus (Bovine).